A 513-amino-acid polypeptide reads, in one-letter code: 2,3-bisphosphoglycerate-independent phosphoglycerate mutase (513 aa).

Mn(2+)-binding residues include D14 and S64. The Phosphoserine intermediate role is filled by S64. Residues H125, 155 to 156, R187, R193, 259 to 262, and K333 each bind substrate; these read RD and RADR. Residues D400, H404, D441, H442, and H460 each contribute to the Mn(2+) site.

The protein belongs to the BPG-independent phosphoglycerate mutase family. As to quaternary structure, monomer. Mn(2+) is required as a cofactor.

The enzyme catalyses (2R)-2-phosphoglycerate = (2R)-3-phosphoglycerate. Its pathway is carbohydrate degradation; glycolysis; pyruvate from D-glyceraldehyde 3-phosphate: step 3/5. Catalyzes the interconversion of 2-phosphoglycerate and 3-phosphoglycerate. This is 2,3-bisphosphoglycerate-independent phosphoglycerate mutase from Pseudomonas fluorescens (strain ATCC BAA-477 / NRRL B-23932 / Pf-5).